The chain runs to 715 residues: Epidermal growth factor receptor kinase substrate 8-like protein 2 (715 aa).

Residues 46–202 (MHETSQYHVQ…RQRQSILPPP (157 aa)) enclose the PID domain. Residues 183 to 243 (QTLKGHQEKI…GFRRRESQEE (61 aa)) are disordered. Pro residues predominate over residues 199–208 (LPPPQGPAPI). 2 stretches are compositionally biased toward basic and acidic residues: residues 213 to 222 (RGGDSPEAKN) and 234 to 243 (GFRRRESQEE). Phosphoserine is present on serine 240. The residue at position 303 (threonine 303) is a Phosphothreonine. A disordered region spans residues 448-487 (VSPVSRQSIRNSQKHSPTSEPTPPGDALPPVSSPHTHRGY). At serine 449 the chain carries Phosphoserine. A compositionally biased stretch (polar residues) spans 451-466 (VSRQSIRNSQKHSPTS). At threonine 469 the chain carries Phosphothreonine. Residues 492 to 551 (AMAKYVKILYDFTARNANELSVLKDEVLEVLEDGRQWWKLRSRSGQAGYVPCNILGEARP) form the SH3 domain. Serine 570 carries the post-translational modification Phosphoserine.

This sequence belongs to the EPS8 family. In terms of assembly, interacts with ABI1. Part of a complex that contains SOS1, ABI1 and EPS8L2. Associates with F-actin. Detected in fibroblasts and placenta.

It localises to the cytoplasm. Its subcellular location is the cell projection. The protein localises to the stereocilium. Its function is as follows. Stimulates guanine exchange activity of SOS1. May play a role in membrane ruffling and remodeling of the actin cytoskeleton. In the cochlea, is required for stereocilia maintenance in adult hair cells. The sequence is that of Epidermal growth factor receptor kinase substrate 8-like protein 2 (EPS8L2) from Homo sapiens (Human).